Reading from the N-terminus, the 456-residue chain is UDP-glycosyltransferase 74D1 (456 aa).

Residues serine 279, 332–334, 349–357, and 371–374 contribute to the UDP-alpha-D-glucose site; these read SPQ, HCGWNSTLE, and YSDQ.

This sequence belongs to the UDP-glycosyltransferase family. Expressed in leaves.

Glucosyltransferase that glucosylates jasmonate (JA) and JA derivatives. Also active on indole-3-acetic acid (IAA), 4-coumrate, cinnamate and caffeate. This Arabidopsis thaliana (Mouse-ear cress) protein is UDP-glycosyltransferase 74D1 (UGT74D1).